We begin with the raw amino-acid sequence, 36 residues long: Glycine-rich protein GWK (36 aa).

Residues 1–36 are disordered; it reads YKRGGGGWGGGGGWKGGGGGGGGWKGGGGGGKGGGG.

In terms of biological role, possesses antifungal activity against a number of phytopathogenic fungi, including H.sativum and F.culmorum. The protein is Glycine-rich protein GWK of Cucumis melo (Muskmelon).